A 391-amino-acid chain; its full sequence is S-adenosylmethionine synthase (391 aa).

Histidine 14 contributes to the ATP binding site. Residue aspartate 16 participates in Mg(2+) binding. Glutamate 42 provides a ligand contact to K(+). Residues glutamate 55 and glutamine 98 each contribute to the L-methionine site. Residues 98-108 are flexible loop; it reads QSADIAMGVDE. ATP contacts are provided by residues 172-174, 238-239, aspartate 247, 253-254, alanine 270, and lysine 274; these read DGK, RF, and RK. L-methionine is bound at residue aspartate 247. Residue lysine 278 participates in L-methionine binding.

It belongs to the AdoMet synthase family. Homotetramer; dimer of dimers. Mg(2+) is required as a cofactor. The cofactor is K(+).

Its subcellular location is the cytoplasm. The enzyme catalyses L-methionine + ATP + H2O = S-adenosyl-L-methionine + phosphate + diphosphate. Its pathway is amino-acid biosynthesis; S-adenosyl-L-methionine biosynthesis; S-adenosyl-L-methionine from L-methionine: step 1/1. In terms of biological role, catalyzes the formation of S-adenosylmethionine (AdoMet) from methionine and ATP. The overall synthetic reaction is composed of two sequential steps, AdoMet formation and the subsequent tripolyphosphate hydrolysis which occurs prior to release of AdoMet from the enzyme. This is S-adenosylmethionine synthase from Clostridium acetobutylicum (strain ATCC 824 / DSM 792 / JCM 1419 / IAM 19013 / LMG 5710 / NBRC 13948 / NRRL B-527 / VKM B-1787 / 2291 / W).